The primary structure comprises 177 residues: UPF0114 protein HPAG1_0183 (177 aa).

The next 4 helical transmembrane spans lie at 15–35, 54–74, 102–122, and 145–165; these read WLLA…GYVF, LVLS…VLMV, FNAL…IFLL, and PIFW…LAAV.

Belongs to the UPF0114 family.

It localises to the cell membrane. This is UPF0114 protein HPAG1_0183 from Helicobacter pylori (strain HPAG1).